A 27-amino-acid chain; its full sequence is Flagellar filament 34 kDa core protein (27 aa).

Belongs to the bacterial flagellin family. The flagellum consists of an outer layer composed of repeating units of FlaA around a core that contains one or all of five antigenically related polypeptides.

It localises to the periplasmic flagellum. It is found in the periplasm. Its function is as follows. Component of the core of the flagella. The protein is Flagellar filament 34 kDa core protein of Spirochaeta aurantia.